Consider the following 522-residue polypeptide: Probable G-protein coupled receptor egl-47 (522 aa).

A run of 7 helical transmembrane segments spans residues 140 to 160 (IIKL…NSFL), 184 to 204 (ASMI…LSAI), 238 to 258 (FVFF…KVVE), 276 to 296 (FILV…YHLY), 345 to 365 (PLLL…LYFL), 398 to 418 (ICWA…ICST), and 472 to 492 (LERT…LLLF).

This sequence belongs to the G-protein coupled receptor family. In terms of tissue distribution, expressed in some neurons in the head, the HSN neurons and the PVQ interneurons of the tail.

Its subcellular location is the membrane. Its function is as follows. Orphan receptor. Regulates egg-laying probably by activating guanine nucleotide-binding protein goa-1, in the hermaphrodite-specific neurons (HSNs). The sequence is that of Probable G-protein coupled receptor egl-47 from Caenorhabditis elegans.